Reading from the N-terminus, the 1093-residue chain is Phosphorylase b kinase regulatory subunit beta (1093 aa).

At Ala2 the chain carries N-acetylalanine. Ala4 bears the Phosphoserine mark. Residues 7–29 (LTAEVSWKVLERRARTKRSGSVY) form a calmodulin-binding region. Ser12 is modified (phosphoserine; by autocatalysis). Ser27 and Ser701 each carry phosphoserine. The disordered stretch occupies residues 689-716 (EPPKHSKVKRQSSTPSAPELGQQPDVNI). Calmodulin-binding stretches follow at residues 768–795 (RVYRRAGSQKLWLAVRYGAAFTQKFSSS) and 920–951 (NGRCWLNRRQIDGSLNRTPTGFYDRVWQILER). The S-farnesyl cysteine moiety is linked to residue Cys1090.

Belongs to the phosphorylase b kinase regulatory chain family. Hexadecamer of 4 heterotetramers, each composed of alpha, beta, gamma, and delta subunits. Alpha (PHKA1 or PHKA2) and beta (PHKB) are regulatory subunits, gamma (PHKG1 or PHKG2) is the catalytic subunit, and delta is calmodulin. Post-translationally, ser-701 is probably phosphorylated by PKA. In terms of processing, although the final Cys may be farnesylated, the terminal tripeptide is probably not removed, and the C-terminus is not methylated.

The protein resides in the cell membrane. It functions in the pathway glycan biosynthesis; glycogen metabolism. Its activity is regulated as follows. By phosphorylation of various serine residues. Phosphorylase b kinase catalyzes the phosphorylation of serine in certain substrates, including troponin I. The beta chain acts as a regulatory unit and modulates the activity of the holoenzyme in response to phosphorylation. This Homo sapiens (Human) protein is Phosphorylase b kinase regulatory subunit beta (PHKB).